The primary structure comprises 304 residues: Galactose 1-dehydrogenase (304 aa).

This sequence belongs to the Gfo/Idh/MocA family. In terms of assembly, homodimer.

It is found in the cytoplasm. The catalysed reaction is D-galactose + NAD(+) = D-galactono-1,4-lactone + NADH + H(+). It functions in the pathway carbohydrate metabolism; galactose metabolism. Its function is as follows. Catalyzes the dehydrogenation of D-galactose by either NAD(+) or NADP(+). Oxidizes following sugars in decreasing order: D-fucose &gt; D-galactose &gt; L-arabinose &gt; 2-deoxy-D-galactose &gt;&gt; 4-deoxy-D-galactose &gt; 2-deoxy-2-amino-D-galactose. In Pseudomonas fluorescens, this protein is Galactose 1-dehydrogenase (gal).